A 26-amino-acid polypeptide reads, in one-letter code: Acetyl-CoA acetyltransferase (26 aa).

Cys21 acts as the Acyl-thioester intermediate in catalysis.

The protein belongs to the thiolase-like superfamily. Thiolase family. As to quaternary structure, homotetramer. Post-translationally, succinylation, adjacent to a coenzyme A binding site. Desuccinylated by SIRT5.

It localises to the mitochondrion. The enzyme catalyses 2 acetyl-CoA = acetoacetyl-CoA + CoA. The sequence is that of Acetyl-CoA acetyltransferase from Sus scrofa (Pig).